The primary structure comprises 108 residues: Alkyltransferase-like protein 1 (108 aa).

It belongs to the MGMT family. ATL subfamily.

Functionally, involved in DNA damage recognition. Binds DNA containing O(6)-methylguanine and larger O(6)-alkylguanine adducts. The DNA is bent, the damaged base is rotated out of the DNA duplex into a hydrophobic binding pocket (nucleotide flipping), with Arg-39 donating a hydrogen bond to the orphaned cytosine to stabilize the extrahelical DNA conformation. This structural change in DNA presents the lesion to the nucleotide excision repair (NER) pathway. The affinity for O(6)-alkylguanine adducts increases with the size of the alkyl group. Low affinity small O(6)-alkylguanines are directed to the global genome repair pathway of NER via rhp7-rhp16 and rhp41-rhp23, while strong binding to bulky O(6)-alkylguanines stalls the transcription machinery and diverts the damage to the transcription-coupled repair pathway of NER via rhp26. This chain is Alkyltransferase-like protein 1, found in Schizosaccharomyces pombe (strain 972 / ATCC 24843) (Fission yeast).